The sequence spans 256 residues: Ribosomal RNA small subunit methyltransferase A (256 aa).

Residues Asn-12, Leu-14, Gly-39, Glu-60, Asp-85, and Asn-103 each coordinate S-adenosyl-L-methionine.

Belongs to the class I-like SAM-binding methyltransferase superfamily. rRNA adenine N(6)-methyltransferase family. RsmA subfamily.

It localises to the cytoplasm. The enzyme catalyses adenosine(1518)/adenosine(1519) in 16S rRNA + 4 S-adenosyl-L-methionine = N(6)-dimethyladenosine(1518)/N(6)-dimethyladenosine(1519) in 16S rRNA + 4 S-adenosyl-L-homocysteine + 4 H(+). Specifically dimethylates two adjacent adenosines (A1518 and A1519) in the loop of a conserved hairpin near the 3'-end of 16S rRNA in the 30S particle. May play a critical role in biogenesis of 30S subunits. In Legionella pneumophila (strain Lens), this protein is Ribosomal RNA small subunit methyltransferase A.